The sequence spans 29 residues: Cytolysin Oshem 1 (29 aa).

It localises to the secreted. The protein resides in the nematocyst. The protein localises to the target cell membrane. Its function is as follows. Cytolysin that shows moderate hemolysis and moderate myonecrosis. The polypeptide is Cytolysin Oshem 1 (Olindias sambaquiensis (Hydromedusa)).